Reading from the N-terminus, the 238-residue chain is tRNA (guanine-N(7)-)-methyltransferase (238 aa).

E71, E96, D123, and D146 together coordinate S-adenosyl-L-methionine. D146 is a catalytic residue. Substrate-binding positions include K150, D182, and 217–220; that span reads TKFE.

It belongs to the class I-like SAM-binding methyltransferase superfamily. TrmB family.

The catalysed reaction is guanosine(46) in tRNA + S-adenosyl-L-methionine = N(7)-methylguanosine(46) in tRNA + S-adenosyl-L-homocysteine. The protein operates within tRNA modification; N(7)-methylguanine-tRNA biosynthesis. Functionally, catalyzes the formation of N(7)-methylguanine at position 46 (m7G46) in tRNA. In Methylobacillus flagellatus (strain ATCC 51484 / DSM 6875 / VKM B-1610 / KT), this protein is tRNA (guanine-N(7)-)-methyltransferase.